Reading from the N-terminus, the 333-residue chain is MFWPTKKDLKTAMEVFALFQWALSALVIVTTVIIVNLYLVVFTSYWPVTVLMLTWLAFDWKTPERGGRRFTCVRKWRLWKHYSDYFPLKMVKTKDISPDRNYILVCHPHGLMAHSCFGHFATDTTGFSKTFPGITPYMLTLGAFFWVPFLRDYVMSTGSCSVSRSSMDFLLTQKGTGNMLVVVVGGLAECRYSTPGSTTLFLKKRQGFVRTALKHGVSLIPAYAFGETDLYDQHIFTPGGFVNRFQKWFQKMVHIYPCAFYGRGLTKNSWGLLPYSQPVTTVVGEPLPLPKIENPSEEIVAKYHTLYIDALRKLFDQHKTKFGISETQELVIV.

3 helical membrane passes run Val15–Val35, Tyr38–Phe58, and Thr130–Leu150.

Belongs to the diacylglycerol acyltransferase family. Monomer. As to expression, expressed in Mueller cells of the retina (at protein level). Abundant in tissues rich in sebaceous glands such as the preputial gland and eyelid.

It is found in the endoplasmic reticulum membrane. The enzyme catalyses a long chain fatty alcohol + a fatty acyl-CoA = a wax ester + CoA. It catalyses the reaction all-trans-retinol + an acyl-CoA = an all-trans-retinyl ester + CoA. It carries out the reaction an acyl-CoA + a 1,2-diacyl-sn-glycerol = a triacyl-sn-glycerol + CoA. The catalysed reaction is 9-cis-retinol + a fatty acyl-CoA = 9-cis-retinyl ester + CoA. The enzyme catalyses 11-cis-retinol + a fatty acyl-CoA = 11-cis-retinyl ester + CoA. It catalyses the reaction 13-cis-retinol + a fatty acyl-CoA = 13-cis-retinyl ester + CoA. It carries out the reaction a 1-acylglycerol + an acyl-CoA = a 1,2-diacylglycerol + CoA. The catalysed reaction is 1-O-alkylglycerol + an acyl-CoA = 1-O-alkyl-3-acylglycerol + CoA. The enzyme catalyses a 2-acylglycerol + an acyl-CoA = a 1,2-diacyl-sn-glycerol + CoA. It catalyses the reaction 2-(9Z-octadecenoyl)-glycerol + hexadecanoyl-CoA = 1-hexadecanoyl-2-(9Z-octadecenoyl)-sn-glycerol + CoA. It carries out the reaction 1,2-di-(9Z-octadecenoyl)-sn-glycerol + hexadecanoyl-CoA = 1,2-di-(9Z)-octadecenoyl-3-hexadecanoyl-sn-glycerol + CoA. The catalysed reaction is hexadecan-1-ol + hexadecanoyl-CoA = hexadecanyl hexadecanoate + CoA. The enzyme catalyses hexadecane-1,2-diol + hexadecanoyl-CoA = 2-hydroxyhexadecyl hexadecanoate + CoA. It catalyses the reaction all-trans-retinol + hexadecanoyl-CoA = all-trans-retinyl hexadecanoate + CoA. It carries out the reaction 1,2-di-(9Z-octadecenoyl)-sn-glycerol + (9Z)-octadecenoyl-CoA = 1,2,3-tri-(9Z-octadecenoyl)-glycerol + CoA. The catalysed reaction is hexadecan-1-ol + (9Z)-octadecenoyl-CoA = hexadecanyl (9Z)-octadecenoate + CoA. The enzyme catalyses (9Z)-hexadecen-1-ol + (9Z)-octadecenoyl-CoA = 1-O-(9Z)-hexadecenyl (9Z)-octadecenoate + CoA. It catalyses the reaction octadecan-1-ol + (9Z)-octadecenoyl-CoA = 1-O-octadecyl (9Z)-octadecenoate + CoA. It carries out the reaction (9Z)-octadecen-1-ol + (9Z)-octadecenoyl-CoA = 1-O-(9Z)-octadecenyl (9Z)-octadecenoate + CoA. The catalysed reaction is hexadecan-1-ol + (9Z)-hexadecenoyl-CoA = 1-O-hexadecyl (9Z)-hexadecenoate + CoA. The enzyme catalyses hexadecan-1-ol + octadecanoyl-CoA = hexadecanyl octadecanoate + CoA. It catalyses the reaction 11-cis-retinol + hexadecanoyl-CoA = 11-cis-retinyl hexadecanoate + CoA. It carries out the reaction 1-O-(9Z-octadecenyl)-glycerol + (9Z)-octadecenoyl-CoA = 1-O-(9Z-octadecyl)-3-(9Z-octadecenoyl)-glycerol + CoA. The catalysed reaction is 1-(9Z-octadecenoyl)-glycerol + (9Z)-octadecenoyl-CoA = 1,2-di-(9Z-octadecenoyl)-glycerol + CoA. The enzyme catalyses 11-cis-retinol + tetradecanoyl-CoA = 11-cis-retinyl tetradecanoate + CoA. It catalyses the reaction 9-cis-retinol + tetradecanoyl-CoA = 9-cis-retinyl tetradecanoate + CoA. It carries out the reaction 9-cis-retinol + hexadecanoyl-CoA = 9-cis-retinyl hexadecanoate + CoA. The catalysed reaction is 13-cis-retinol + tetradecanoyl-CoA = 13-cis-retinyl tetradecanoate + CoA. The enzyme catalyses all-trans-retinol + tetradecanoyl-CoA = all-trans-retinyl tetradecanoate + CoA. It catalyses the reaction tetradecan-1-ol + tetradecanoyl-CoA = tetradecanyl tetradecanoate + CoA. With respect to regulation, 11-cis retinoids act as allosteric modulators of acyl-CoA retinol O-fatty-acyltransferase (ARAT) activity by suppressing esterification of 9-cis, 13-cis, or all-trans retinols concurrently increasing the enzyme specificity toward 11-cis isomer. Its function is as follows. Acyltransferase that catalyzes the formation of ester bonds between fatty alcohols and fatty acyl-CoAs to form wax monoesters. Shows a preference for medium chain acyl-CoAs from C12 to C16 in length and fatty alcohols shorter than C20, as the acyl donor and acceptor, respectively. Also possesses fatty acyl-CoA retinol acyltransferase (ARAT) activity that preferentially esterifies 11-cis-retinol, a chromophore precursor of bleached opsin pigments in cone cells. Shows higher catalytic efficiency toward 11-cis-retinol versus 9-cis-retinol, 13- cis-retinol and all-trans-retinol substrates. In Mus musculus (Mouse), this protein is Acyl-CoA wax alcohol acyltransferase 2 (Awat2).